A 722-amino-acid chain; its full sequence is Tudor domain-containing protein 3 (722 aa).

The UBA domain maps to 264 to 304; it reads LVDEKALRHITEMGFSKEASRQALMDNGNNLEAALNVLLNS. 3 disordered regions span residues 305 to 342, 355 to 453, and 470 to 526; these read NKQK…SAPS, LSVE…RSYS, and SDTV…HFYD. At Ser327 the chain carries Phosphoserine. Residues 362 to 388 are compositionally biased toward polar residues; it reads SQPQQLHQGQNRVSNTEQNGVKDNNQP. 2 stretches are compositionally biased toward basic and acidic residues: residues 392–409 and 442–453; these read PRND…RFQR and AEERTKCDRSYS. Residue Lys541 forms a Glycyl lysine isopeptide (Lys-Gly) (interchain with G-Cter in SUMO2) linkage. Residues 626 to 686 enclose the Tudor domain; that stretch reads LWKSGDECLA…RPIQSEAWEE (61 aa). Basic and acidic residues predominate over residues 695 to 704; the sequence is EFRRGGDGQP. The disordered stretch occupies residues 695-722; that stretch reads EFRRGGDGQPRRSTRPTQQFYQPPRARN. An EBM motif; may mediate interaction with the EJC region spans residues 702-722; the sequence is GQPRRSTRPTQQFYQPPRARN.

In terms of assembly, component of mRNA stress granules. Interacts with FMR1, FXR1, FXR2, EWSR1, FUS, SERBP1, EEF1A1 and DDX3X or DDX3Y, and with the small nuclear ribonucleoprotein-associated proteins SNRPB and SNRPN. Interacts with 'Lys-48'-linked tetra-ubiquitin, but not with monoubiquitin or 'Lys-63'-linked ubiquitin chains. May interact with the exon junction complex (EJC) composed at least of CASC3, EIF4A3, MAGOH and RBM8A. Interacts with POLR2A (via the C-terminal domain (CTD)).

It is found in the cytoplasm. The protein resides in the nucleus. Its function is as follows. Scaffolding protein that specifically recognizes and binds dimethylarginine-containing proteins. Plays a role in the regulation of translation of target mRNAs by binding Arg/Gly-rich motifs (GAR) in dimethylarginine-containing proteins. In nucleus, acts as a coactivator: recognizes and binds asymmetric dimethylation on the core histone tails associated with transcriptional activation (H3R17me2a and H4R3me2a) and recruits proteins at these arginine-methylated loci. In cytoplasm, acts as an antiviral factor that participates in the assembly of stress granules together with G3BP1. The sequence is that of Tudor domain-containing protein 3 (TDRD3) from Bos taurus (Bovine).